The sequence spans 306 residues: Putative syntaxin-3 (306 aa).

Over 1-279 (MPRDRLKELQ…QKRARKMKVC (279 aa)) the chain is Cytoplasmic. Residues 40-180 (QDADFEMFLE…QLSDEEIENA (141 aa)) are required for the regulation of the defecation motor program. One can recognise a t-SNARE coiled-coil homology domain in the interval 204 to 266 (YDEVKSRADE…KQARGNVEEA (63 aa)). A helical; Anchor for type IV membrane protein membrane pass occupies residues 280–300 (IIIGSIIAVLILILFIQSAVC). Over 301-306 (HFTPIC) the chain is Extracellular.

Belongs to the syntaxin family. Expressed in body wall, pharyngeal, vulval and enteric muscles and in some head neurons.

It is found in the cell membrane. In terms of biological role, potentially involved in docking of synaptic vesicles at presynaptic active zones. Acts in the intestine to regulate anterior body muscle contractions (aBOC) and the expulsion steps during the defecation motor program (DMP). This Caenorhabditis elegans protein is Putative syntaxin-3.